A 279-amino-acid polypeptide reads, in one-letter code: Tryptophan 2,3-dioxygenase (279 aa).

Substrate-binding positions include 48 to 52, Tyr110, and Arg114; that span reads FIIQH. His237 contacts heme. Thr251 serves as a coordination point for substrate.

The protein belongs to the tryptophan 2,3-dioxygenase family. Homotetramer. Heme is required as a cofactor.

It carries out the reaction L-tryptophan + O2 = N-formyl-L-kynurenine. It participates in amino-acid degradation; L-tryptophan degradation via kynurenine pathway; L-kynurenine from L-tryptophan: step 1/2. In terms of biological role, heme-dependent dioxygenase that catalyzes the oxidative cleavage of the L-tryptophan (L-Trp) pyrrole ring and converts L-tryptophan to N-formyl-L-kynurenine. Catalyzes the oxidative cleavage of the indole moiety. In Ruegeria sp. (strain TM1040) (Silicibacter sp.), this protein is Tryptophan 2,3-dioxygenase.